Reading from the N-terminus, the 287-residue chain is Large ribosomal subunit protein uL2 (287 aa).

Residues 221-287 are disordered; it reads RGSVMNPCDH…SKRSRGGRDS (67 aa). Residues 258 to 287 show a composition bias toward basic residues; the sequence is KTRKRNKPSNRYVLRKRRKTSKRSRGGRDS.

This sequence belongs to the universal ribosomal protein uL2 family. Part of the 50S ribosomal subunit. Forms a bridge to the 30S subunit in the 70S ribosome.

One of the primary rRNA binding proteins. Required for association of the 30S and 50S subunits to form the 70S ribosome, for tRNA binding and peptide bond formation. It has been suggested to have peptidyltransferase activity; this is somewhat controversial. Makes several contacts with the 16S rRNA in the 70S ribosome. The protein is Large ribosomal subunit protein uL2 of Parasynechococcus marenigrum (strain WH8102).